The sequence spans 475 residues: 3-isopropylmalate dehydratase large subunit (475 aa).

Residues Cys-352, Cys-412, and Cys-415 each coordinate [4Fe-4S] cluster.

It belongs to the aconitase/IPM isomerase family. LeuC type 1 subfamily. As to quaternary structure, heterodimer of LeuC and LeuD. Requires [4Fe-4S] cluster as cofactor.

The enzyme catalyses (2R,3S)-3-isopropylmalate = (2S)-2-isopropylmalate. The protein operates within amino-acid biosynthesis; L-leucine biosynthesis; L-leucine from 3-methyl-2-oxobutanoate: step 2/4. Functionally, catalyzes the isomerization between 2-isopropylmalate and 3-isopropylmalate, via the formation of 2-isopropylmaleate. The sequence is that of 3-isopropylmalate dehydratase large subunit from Gluconobacter oxydans (strain 621H) (Gluconobacter suboxydans).